A 727-amino-acid polypeptide reads, in one-letter code: ABC transporter G family member STR2 (727 aa).

Topologically, residues 1-475 are cytoplasmic; sequence MKTQGLELET…NFTNIRRTPE (475 aa). Residues 25–275 form the ABC transporter domain; it reads LEFESLTYTV…LNRMGRKIPK (251 aa). 69–76 provides a ligand contact to ATP; sequence GPSGAGKS. A helical transmembrane segment spans residues 476–496; the sequence is LFLSRLMVLTFMGVMMATMFH. Over 497 to 510 the chain is Extracellular; it reads NPKNTLQGITNRLS. Residues 511 to 531 traverse the membrane as a helical segment; the sequence is FFIFTVCLFFFSSNDAVPAFI. The Cytoplasmic segment spans residues 532-559; that stretch reads QERFIFIRETSHNAYRASCYTIASLITH. Residues 560 to 580 form a helical membrane-spanning segment; that stretch reads MPFLALQALAYAAIVWFALEL. The Extracellular portion of the chain corresponds to 581–583; it reads RGP. A helical transmembrane segment spans residues 584–604; the sequence is FIYFFLVLFISLLSTNSFVVF. The Cytoplasmic portion of the chain corresponds to 605–612; sequence VSSIVPNY. The helical transmembrane segment at 613–633 threads the bilayer; that stretch reads ILGYAAVIAFTALFFLFCGYF. The Extracellular segment spans residues 634 to 699; it reads LSSEDIPLYW…GTEEIKKRNN (66 aa). N-linked (GlcNAc...) asparagine glycosylation occurs at asparagine 667. A helical transmembrane segment spans residues 700–720; it reads VLIMLGWAVLYRILFYIILRF. Residues 721 to 727 lie on the Cytoplasmic side of the membrane; the sequence is ASKNQRS.

Belongs to the ABC transporter superfamily. ABCG family. Stunted arbuscule (STR) subfamily. Heterodimerizes with STR; the resulting transporter is located in the peri-arbuscular membrane. In terms of tissue distribution, expressed constitutively in the vascular tissue of roots.

The protein resides in the cell membrane. Its function is as follows. Together with STR, required for arbuscule development in arbuscular mycorrhizal symbiosis. The protein is ABC transporter G family member STR2 of Medicago truncatula (Barrel medic).